We begin with the raw amino-acid sequence, 1295 residues long: DNA-directed RNA polymerase subunit beta' (1295 aa).

Zn(2+) is bound by residues Cys60, Cys62, Cys75, and Cys78. Asp516, Asp518, and Asp520 together coordinate Mg(2+). Residues Cys841, Cys914, Cys921, and Cys924 each coordinate Zn(2+).

This sequence belongs to the RNA polymerase beta' chain family. As to quaternary structure, the RNAP catalytic core consists of 2 alpha, 1 beta, 1 beta' and 1 omega subunit. When a sigma factor is associated with the core the holoenzyme is formed, which can initiate transcription. The cofactor is Mg(2+). Requires Zn(2+) as cofactor.

The enzyme catalyses RNA(n) + a ribonucleoside 5'-triphosphate = RNA(n+1) + diphosphate. DNA-dependent RNA polymerase catalyzes the transcription of DNA into RNA using the four ribonucleoside triphosphates as substrates. The chain is DNA-directed RNA polymerase subunit beta' from Dehalococcoides mccartyi (strain ATCC BAA-2266 / KCTC 15142 / 195) (Dehalococcoides ethenogenes (strain 195)).